The primary structure comprises 690 residues: DNA ligase (690 aa).

NAD(+) contacts are provided by residues 36 to 40, 85 to 86, and Glu124; these read DAVYD and SL. Lys126 (N6-AMP-lysine intermediate) is an active-site residue. NAD(+) is bound by residues Arg147, Glu184, Lys308, and Lys332. Positions 426, 429, 444, and 449 each coordinate Zn(2+). Positions 614-690 constitute a BRCT domain; that stretch reads NQSNVFDGKS…INENELKLLL (77 aa).

The protein belongs to the NAD-dependent DNA ligase family. LigA subfamily. Mg(2+) serves as cofactor. Requires Mn(2+) as cofactor.

The catalysed reaction is NAD(+) + (deoxyribonucleotide)n-3'-hydroxyl + 5'-phospho-(deoxyribonucleotide)m = (deoxyribonucleotide)n+m + AMP + beta-nicotinamide D-nucleotide.. DNA ligase that catalyzes the formation of phosphodiester linkages between 5'-phosphoryl and 3'-hydroxyl groups in double-stranded DNA using NAD as a coenzyme and as the energy source for the reaction. It is essential for DNA replication and repair of damaged DNA. The chain is DNA ligase from Prochlorococcus marinus (strain NATL1A).